A 166-amino-acid chain; its full sequence is Pyruvoyl-dependent arginine decarboxylase (166 aa).

Ser45 bears the Pyruvic acid (Ser) mark.

The protein belongs to the PdaD family. Pyruvate serves as cofactor.

It catalyses the reaction L-arginine + H(+) = agmatine + CO2. This is Pyruvoyl-dependent arginine decarboxylase from Methanocella arvoryzae (strain DSM 22066 / NBRC 105507 / MRE50).